Reading from the N-terminus, the 95-residue chain is MLHTLPHCASSVDFPALLRLLKEGDALLLLQDGVTVAIEGNRFLESLRDAPITVYALKEDIDARGLGGQISDSVVRVDYTDFVRLTVKYANQMAW.

This sequence belongs to the DsrH/TusB family. Heterohexamer, formed by a dimer of trimers. The hexameric TusBCD complex contains 2 copies each of TusB, TusC and TusD. The TusBCD complex interacts with TusE.

It localises to the cytoplasm. In terms of biological role, part of a sulfur-relay system required for 2-thiolation of 5-methylaminomethyl-2-thiouridine (mnm(5)s(2)U) at tRNA wobble positions. The protein is Protein TusB of Salmonella dublin (strain CT_02021853).